The sequence spans 460 residues: ATP synthase subunit beta (460 aa).

Residue 150–157 participates in ATP binding; the sequence is GGAGVGKT.

It belongs to the ATPase alpha/beta chains family. In terms of assembly, F-type ATPases have 2 components, CF(1) - the catalytic core - and CF(0) - the membrane proton channel. CF(1) has five subunits: alpha(3), beta(3), gamma(1), delta(1), epsilon(1). CF(0) has three main subunits: a(1), b(2) and c(9-12). The alpha and beta chains form an alternating ring which encloses part of the gamma chain. CF(1) is attached to CF(0) by a central stalk formed by the gamma and epsilon chains, while a peripheral stalk is formed by the delta and b chains.

It localises to the cell inner membrane. It catalyses the reaction ATP + H2O + 4 H(+)(in) = ADP + phosphate + 5 H(+)(out). Produces ATP from ADP in the presence of a proton gradient across the membrane. The catalytic sites are hosted primarily by the beta subunits. This is ATP synthase subunit beta from Salmonella paratyphi A (strain ATCC 9150 / SARB42).